Reading from the N-terminus, the 423-residue chain is F-box/LRR-repeat protein 2 (423 aa).

Residues 9-55 (GLINKKLPKELLLRIFSFLDIVTLCRCAQISKAWNILALDGSNWQRI) form the F-box domain. LRR repeat units lie at residues 61–87 (QTDV…SLRG), 88–113 (CIGV…NLNG), 114–139 (CTKI…DLTS), 140–165 (CVSI…NLSW), 166–191 (CDQI…LLRG), 192–217 (CTQL…NLQS), 218–243 (CSRV…CLSG), 244–269 (CGSL…EAAR), 270–295 (CSHL…DLEE), 296–321 (CILI…SLSH), 322–350 (CELI…ELDN), 351–375 (CLLI…ELYD), and 376–401 (CQQV…AYFA). The segment at 80–90 (LRKLSLRGCIG) is interaction with Calmodulin. Lys201 is covalently cross-linked (Glycyl lysine isopeptide (Lys-Gly) (interchain with G-Cter in ubiquitin)). Thr404 is modified (phosphothreonine). The S-geranylgeranyl cysteine moiety is linked to residue Cys420. The CAAX motif motif lies at 420-423 (CVIL).

As to quaternary structure, part of the SCF (SKP1-CUL1-F-box) E3 ubiquitin-protein ligase complex SCF(FBXL2) composed of CUL1, SKP1, RBX1 and FBXL2. Interacts with calmodulin; may antagonize substrate ubiquitination by SCF(FBXL2). May interact with PIK3R1. Interacts with PTPN13. Post-translationally, phosphorylated by GSK-beta (GSK3B), promoting recognition by FBXO3, leading to its ubiquitination by the SCF(FBXO3) complex. Ubiquitinated at Lys-201 by the SCF(FBXO3) complex in response to lipopolysaccharide (LPS), leading to its degradation by the proteasome.

It is found in the membrane. It participates in protein modification; protein ubiquitination. In terms of biological role, calcium-activated substrate recognition component of the SCF (SKP1-cullin-F-box protein) E3 ubiquitin-protein ligase complex, SCF(FBXL2), which mediates the ubiquitination and subsequent proteasomal degradation of target proteins. Unlike many F-box proteins, FBXL2 does not seem to target phosphodegron within its substrates but rather calmodulin-binding motifs and is thereby antagonized by calmodulin. This is the case for the cyclins CCND2 and CCND3 which polyubiquitination and subsequent degradation are inhibited by calmodulin. Through CCND2 and CCND3 degradation induces cell-cycle arrest in G(0). SCF(FBXL2) also mediates PIK3R2 ubiquitination and proteasomal degradation thereby regulating phosphatidylinositol 3-kinase signaling and autophagy. PCYT1A monoubiquitination by SCF(FBXL2) and subsequent degradation regulates synthesis of phosphatidylcholine, which is utilized for formation of membranes and of pulmonary surfactant. The SCF(FBXL2) complex acts as a regulator of inflammation by mediating ubiquitination and degradation of TRAF proteins (TRAF1, TRAF2, TRAF3, TRAF4, TRAF5 and TRAF6). The SCF(FBXL2) complex acts as a negative regulator of the NLRP3 inflammasome by mediating ubiquitination and degradation of NLRP3. The protein is F-box/LRR-repeat protein 2 of Bos taurus (Bovine).